The following is a 404-amino-acid chain: MPNKITKEALTFDDVSLIPRKSSVLPSEVSLKTQLTKNISLNIPFLSSAMDTVTESQMAIAIAKEGGIGIIHKNMSIEAQRKEIEKVKTYKFQKTINTNGDTNEQKPEIFTAKQHLEKSDAYKNAEHKEDFPNACKDLNNKLRVGAAVSIDIDTIERVEELVKAHVDILVIDSAHGHSTRIIELIKKIKTKYPNLDLIAGNIVTKEAALDLISVGADCLKVGIGPGSICTTRIVAGVGVPQITAICDVYEACNNTNICIIADGGIRFSGDVVKAIAAGADSVMIGNLFAGTKESPSEEIIYNGKKFKSYVGMGSISAMKRGSKSRYFQLENNEPKKLVPEGIEGMVPYSGKLKDILTQLKGGLMSGMGYLGAATISDLKINSKFVKISHSSLKESHPHDVFSIT.

NAD(+)-binding positions include D172 and 222 to 224 (GIG). The K(+) site is built by G224 and G226. S227 contacts IMP. K(+) is bound at residue C229. C229 (thioimidate intermediate) is an active-site residue. IMP-binding positions include 262-264 (DGG), 285-286 (GN), and 309-313 (YVGMG). The active-site Proton acceptor is R325. E340 contributes to the IMP binding site. Residues E394, S395, and H396 each coordinate K(+).

This sequence belongs to the IMPDH/GMPR family. As to quaternary structure, homotetramer. K(+) is required as a cofactor.

The enzyme catalyses IMP + NAD(+) + H2O = XMP + NADH + H(+). Its pathway is purine metabolism; XMP biosynthesis via de novo pathway; XMP from IMP: step 1/1. Mycophenolic acid (MPA) is a non-competitive inhibitor that prevents formation of the closed enzyme conformation by binding to the same site as the amobile flap. In contrast, mizoribine monophosphate (MZP) is a competitive inhibitor that induces the closed conformation. MPA is a potent inhibitor of mammalian IMPDHs but a poor inhibitor of the bacterial enzymes. MZP is a more potent inhibitor of bacterial IMPDH. In terms of biological role, catalyzes the conversion of inosine 5'-phosphate (IMP) to xanthosine 5'-phosphate (XMP), the first committed and rate-limiting step in the de novo synthesis of guanine nucleotides, and therefore plays an important role in the regulation of cell growth. Essential for mouse infection by tick bite and critical for the survival in environments that appear to lack sufficient amounts of guanine, guanosine, and/or deoxyguanosine to support spirochete growth, such as mammalian host tissues. In Borreliella burgdorferi (strain ATCC 35210 / DSM 4680 / CIP 102532 / B31) (Borrelia burgdorferi), this protein is Inosine-5'-monophosphate dehydrogenase.